Here is a 661-residue protein sequence, read N- to C-terminus: Galactan 5-O-arabinofuranosyltransferase (661 aa).

13 consecutive transmembrane segments (helical) span residues Leu26 to Gly46, Val64 to Leu84, Ala108 to Ile128, Ala194 to Trp214, Ile217 to Ala237, Pro243 to Ala263, Gly265 to Thr285, Leu286 to Val306, Pro312 to Gly332, Val362 to Val382, Met393 to Leu413, Leu418 to Ile438, and Thr458 to Ala478.

Belongs to the glycosyltransferase 85 family.

It localises to the cell membrane. The catalysed reaction is Adds an alpha-D-arabinofuranosyl group from trans,octacis-decaprenylphospho-beta-D-arabinofuranose at the 5-O-position of the eighth, tenth and twelfth galactofuranose unit of the galactofuranan chain of [beta-D-galactofuranosyl-(1-&gt;5)-beta-D-galactofuranosyl-(1-&gt;6)]14-beta-D-galactofuranosyl-(1-&gt;5)-beta-D-galactofuranosyl-(1-&gt;4)-alpha-L-rhamnopyranosyl-(1-&gt;3)-N-acetyl-alpha-D-glucosaminyl-diphospho-trans,octacis-decaprenol.. It participates in cell wall biogenesis; cell wall polysaccharide biosynthesis. Its function is as follows. Involved in the biosynthesis of the arabinogalactan (AG) region of the mycolylarabinogalactan-peptidoglycan (mAGP) complex, an essential component of the cell wall. Catalyzes the addition of the first key arabinofuranosyl (Araf) residue from the sugar donor decaprenyl-phospho-arabinose (DPA) on the C-5 of a 6-linked galactofuranosyl (Galf) of the galactan domain, thus 'priming' the galactan for further elaboration by other arabinofuranosyltransferases. The chain is Galactan 5-O-arabinofuranosyltransferase from Corynebacterium glutamicum (strain ATCC 13032 / DSM 20300 / JCM 1318 / BCRC 11384 / CCUG 27702 / LMG 3730 / NBRC 12168 / NCIMB 10025 / NRRL B-2784 / 534).